Here is a 261-residue protein sequence, read N- to C-terminus: MSWKKALRIPGGLRAATVTLMLAMLSTPVAEGRDSPEDFVYQFKAMCYFTNGTERVRYVTRYIYNREEYARFDSDVEVYRAVTPLGPPDAEYWNSQKEVLERTRAELDTVCRHNYQLELRTTLQRRVEPTVTISPSRTEALNHHNLLVCSVTDFYPAQIKVRWFRNDQEETTGVVSTPLIRNGDWTFQILVMLEMTPQHGDVYTCHVEHPSLQNPITVEWRAQSESAQSKMLSGIGGFVLGLIFLGLGLIIHHRSQKGLLH.

The N-terminal stretch at 1 to 32 (MSWKKALRIPGGLRAATVTLMLAMLSTPVAEG) is a signal peptide. The segment at 33–126 (RDSPEDFVYQ…LELRTTLQRR (94 aa)) is beta-1. Topologically, residues 33–230 (RDSPEDFVYQ…RAQSESAQSK (198 aa)) are extracellular. 2 disulfides stabilise this stretch: Cys-47–Cys-111 and Cys-149–Cys-205. N-linked (GlcNAc...) asparagine glycosylation is present at Asn-51. Positions 127–220 (VEPTVTISPS…SLQNPITVEW (94 aa)) are beta-2. The Ig-like C1-type domain occupies 129–217 (PTVTISPSRT…EHPSLQNPIT (89 aa)). A connecting peptide region spans residues 221–230 (RAQSESAQSK). Residues 231 to 251 (MLSGIGGFVLGLIFLGLGLII) form a helical membrane-spanning segment. Residues 252-261 (HHRSQKGLLH) are Cytoplasmic-facing.

It belongs to the MHC class II family. As to quaternary structure, heterodimer of an alpha and a beta subunit; also referred as MHC class II molecule. In the endoplasmic reticulum (ER) it forms a heterononamer; 3 MHC class II molecules bind to a CD74 homotrimer (also known as invariant chain or HLA class II histocompatibility antigen gamma chain). In the endosomal/lysosomal system; CD74 undergoes sequential degradation by various proteases; leaving a small fragment termed CLIP on each MHC class II molecule. MHC class II molecule interacts with HLA_DM, and HLA_DO in B-cells, in order to release CLIP and facilitate the binding of antigenic peptides.

It is found in the cell membrane. It localises to the endoplasmic reticulum membrane. The protein localises to the golgi apparatus. The protein resides in the trans-Golgi network membrane. Its subcellular location is the endosome membrane. It is found in the lysosome membrane. Binds peptides derived from antigens that access the endocytic route of antigen presenting cells (APC) and presents them on the cell surface for recognition by the CD4 T-cells. The peptide binding cleft accommodates peptides of 10-30 residues. The peptides presented by MHC class II molecules are generated mostly by degradation of proteins that access the endocytic route, where they are processed by lysosomal proteases and other hydrolases. Exogenous antigens that have been endocytosed by the APC are thus readily available for presentation via MHC II molecules, and for this reason this antigen presentation pathway is usually referred to as exogenous. As membrane proteins on their way to degradation in lysosomes as part of their normal turn-over are also contained in the endosomal/lysosomal compartments, exogenous antigens must compete with those derived from endogenous components. Autophagy is also a source of endogenous peptides, autophagosomes constitutively fuse with MHC class II loading compartments. In addition to APCs, other cells of the gastrointestinal tract, such as epithelial cells, express MHC class II molecules and CD74 and act as APCs, which is an unusual trait of the GI tract. To produce a MHC class II molecule that presents an antigen, three MHC class II molecules (heterodimers of an alpha and a beta chain) associate with a CD74 trimer in the ER to form a heterononamer. Soon after the entry of this complex into the endosomal/lysosomal system where antigen processing occurs, CD74 undergoes a sequential degradation by various proteases, including CTSS and CTSL, leaving a small fragment termed CLIP (class-II-associated invariant chain peptide). The removal of CLIP is facilitated by HLA-DM via direct binding to the alpha-beta-CLIP complex so that CLIP is released. HLA-DM stabilizes MHC class II molecules until primary high affinity antigenic peptides are bound. The MHC II molecule bound to a peptide is then transported to the cell membrane surface. In B-cells, the interaction between HLA-DM and MHC class II molecules is regulated by HLA-DO. Primary dendritic cells (DCs) also to express HLA-DO. Lysosomal microenvironment has been implicated in the regulation of antigen loading into MHC II molecules, increased acidification produces increased proteolysis and efficient peptide loading. The sequence is that of HLA class II histocompatibility antigen, DQ beta 1 chain (HLA-DQB1) from Homo sapiens (Human).